Here is a 185-residue protein sequence, read N- to C-terminus: CASP-like protein 5A1 (185 aa).

Residues 1-45 (MNVSHPAVHPVGVPPALGGHAVPPRMRMRVRMEYLVFQGMPLPGT) are Cytoplasmic-facing. A helical transmembrane segment spans residues 46 to 66 (LGGLVLRLGQFCSALIAFSVM). The Extracellular segment spans residues 67-76 (LSVRDFSVTA). The helical transmembrane segment at 77 to 97 (FCYLVAATVLQCLWSLAMAVI) threads the bilayer. Topologically, residues 98–121 (DVYALLVKRSLRNPLLVSIFVVGD) are cytoplasmic. The helical transmembrane segment at 122 to 142 (GVTATLTFAAACASAGVIVLI) threads the bilayer. Residues 143–160 (GNDIAMCKDNPCANYEAA) lie on the Extracellular side of the membrane. The chain crosses the membrane as a helical span at residues 161–181 (IIMAFLSWFMVSISFILTFWL). Residues 182 to 185 (LATL) lie on the Cytoplasmic side of the membrane.

It belongs to the Casparian strip membrane proteins (CASP) family. In terms of assembly, homodimer and heterodimers.

It localises to the cell membrane. The protein is CASP-like protein 5A1 of Picea sitchensis (Sitka spruce).